A 910-amino-acid chain; its full sequence is Coatomer subunit beta'-2 (910 aa).

9 WD repeats span residues 13–52, 55–94, 97–136, 140–180, 183–224, 227–266, 269–309, 351–393, and 461–501; these read QRSE…MVKS, VTEL…KVKV, AHTD…MCTQ, GHSH…PNFT, GHSK…CVQT, GHAH…LENT, YGLE…ASMD, TCDL…GSAL, and RIDV…SHLD. The segment at 882-910 is disordered; that stretch reads ADGSTDGAVLVNGNDTEEQWGTNNEESSA. The span at 900-910 shows a compositional bias: polar residues; that stretch reads QWGTNNEESSA.

The protein belongs to the WD repeat COPB2 family. In terms of assembly, oligomeric complex that consists of at least the alpha, beta, beta', gamma, delta, epsilon and zeta subunits.

The protein localises to the cytoplasm. It localises to the golgi apparatus membrane. The protein resides in the cytoplasmic vesicle. Its subcellular location is the COPI-coated vesicle membrane. Functionally, the coatomer is a cytosolic protein complex that binds to dilysine motifs and reversibly associates with Golgi non-clathrin-coated vesicles, which further mediate biosynthetic protein transport from the ER, via the Golgi up to the trans Golgi network. Coatomer complex is required for budding from Golgi membranes, and is essential for the retrograde Golgi-to-ER transport of dilysine-tagged proteins. This is Coatomer subunit beta'-2 from Oryza sativa subsp. japonica (Rice).